We begin with the raw amino-acid sequence, 279 residues long: Tryptophan 2,3-dioxygenase (279 aa).

Residues 48-52 (FIIQH), Tyr-110, and Arg-114 contribute to the substrate site. His-237 serves as a coordination point for heme. Substrate is bound at residue Thr-251.

It belongs to the tryptophan 2,3-dioxygenase family. In terms of assembly, homotetramer. Requires heme as cofactor.

The enzyme catalyses L-tryptophan + O2 = N-formyl-L-kynurenine. The protein operates within amino-acid degradation; L-tryptophan degradation via kynurenine pathway; L-kynurenine from L-tryptophan: step 1/2. Heme-dependent dioxygenase that catalyzes the oxidative cleavage of the L-tryptophan (L-Trp) pyrrole ring and converts L-tryptophan to N-formyl-L-kynurenine. Catalyzes the oxidative cleavage of the indole moiety. The chain is Tryptophan 2,3-dioxygenase from Bradyrhizobium sp. (strain BTAi1 / ATCC BAA-1182).